We begin with the raw amino-acid sequence, 758 residues long: CRISPR system single-strand-specific deoxyribonuclease Cas10/Csm1 (subtype III-A) (758 aa).

The interval Met-1–Gly-82 is HD domain. The 139-residue stretch at Lys-509 to Ser-647 folds into the GGDEF domain.

The protein belongs to the CRISPR-associated Cas10/Csm1 family. Part of the Csm effector complex that includes at least Cas10(1), Csm2(3), Csm3(5), Csm4(1), Csm5(1) and mature crRNA. The Csm complex is elongated and slightly twisted with a maximal length of 215 Angstroms and a diameter of 75-80 Angstroms. It has been modeled to have a central protein filamant of Csm3 subunits along which the dsRNA helix of paired crRNA and target RNA binds. The filament is capped at one end by Cas10 and Csm4 and at the other end by Csm5; ssDNA is thought to bind to the N-terminal HD domain of Cas10. Csm with a precursor crRNA does not include Csm5, while Cas6, the enzyme probably involved in pre-crRNA processing, is found associated with a subset of the Csm complex. A divalent metal cation is required as a cofactor.

The catalysed reaction is 6 ATP = cyclic hexaadenylate + 6 diphosphate. Its activity is regulated as follows. ssDNase activity is activated by target RNA binding to the Csm-crRNA complex and is inhibited by EDTA. In terms of biological role, CRISPR (clustered regularly interspaced short palindromic repeat) is an adaptive immune system that provides protection against mobile genetic elements (viruses, transposable elements and conjugative plasmids). CRISPR clusters contain spacers, sequences complementary to antecedent mobile elements, and target invading nucleic acids. CRISPR clusters are transcribed and processed into CRISPR RNA (crRNA). The type III-A Csm effector complex binds crRNA and acts as a crRNA-guided RNase, DNase and cyclic oligoadenylate synthase; binding of target RNA cognate to the crRNA is required for all activities. In a heterologous host this Csm effector complex restricts ssRNA phage MS2, suggesting it may target RNA viruses in vivo. Csm functions as a non-specific ssDNase. Base-pairing between crRNA and target RNA to form a ternary Csm complex activates a ssDNase activity; target RNA cleavage suppresses the ssDNase, a temporal control that prevents uncontrolled DNA degradation. Viral RNA transcripts probably tether the Csm complex to the viral genome, recruiting Cas10 ssDNA activity which is able to degrade DNA in the transcription bubble, spatially controlling the DNase activity. Its function is as follows. This subunit has a weak ssDNase activity that is dramatically activated by the ternary Csm effector complex (the crRNA, Cas proteins and a cognate target ssRNA). Target RNA and ssDNA are cleaved simultaneously, although RNase activity (of Csm3) is much faster. RNA cleavage by Csm3 is not required for ssDNase activity as Csm complex with inactive Csm3 still has ssDNase activity; however as the cleaved target RNA products dissociate away ssDNase activity decreases. Self-recognition, with subsequent repression of the ssDNase activity, occurs when the 5' handle of the crRNA bases pairs with the 3' flanking sequence of the target RNA (which would occur if the CRISPR locus were transcribed as an anti-pre-crRNA). This protein has low activity on dsDNA which is not stimulated by the Csm complex. Functionally, this subunit is a single-strand-specific deoxyribonuclease (ssDNase) which digests both linear and circular ssDNA; it has both exo- and endonuclease activity. In terms of biological role, when associated with the ternary Csm effector complex (the crRNA, Cas proteins and a cognate target ssRNA) synthesizes cyclic oligoadenylates (cOA) from ATP, producing cyclic triadenylate (cA3) up to cyclic hexaadenylate (cA6), which is the active cOA. The enzyme is also able to cyclize pppA3 up to pppA6. cOAs are second messengers that induce an antiviral state important for defense against invading nucleic acids. Synthesis of cOA can occur with AMP plus ATP, 2'dATP or 3'dATP (but no other nucleotides), and requires a free 3'-OH ribose moiety. The chain is CRISPR system single-strand-specific deoxyribonuclease Cas10/Csm1 (subtype III-A) from Streptococcus thermophilus.